We begin with the raw amino-acid sequence, 174 residues long: FMN reductase (NADH) SmoA (174 aa).

It belongs to the non-flavoprotein flavin reductase family.

It carries out the reaction FMNH2 + NAD(+) = FMN + NADH + 2 H(+). In terms of biological role, part of the sulfoquinovose monooxygenase (sulfo-SMO) pathway, a D-sulfoquinovose degradation pathway that enables the complete utilization of all carbons within sulfoquinovose (SQ) with concomitant production of inorganic sulfite. Catalyzes the NADH-dependent reduction of FMN. FMNH(2) is then transferred to the sulfoquinovose monooxygenase SmoC. The protein is FMN reductase (NADH) SmoA of Agrobacterium fabrum (strain C58 / ATCC 33970) (Agrobacterium tumefaciens (strain C58)).